Reading from the N-terminus, the 370-residue chain is NSFL1 cofactor p47 (370 aa).

Residues 54–73 are disordered; sequence SQATPSSVSRGTAPSDNRVT. 3 positions are modified to phosphoserine: Ser74, Ser102, and Ser114. Disordered stretches follow at residues 80–116 and 137–157; these read HDQDEDEEEEEGQRFYAGGSERSGQQIVGPPRKRSPN and VTKSPGETSKPRPFAGGGYRL. Residues 109–115 carry the Nuclear localization signal motif; it reads PPRKRSP. Phosphoserine; by CDK1 is present on Ser140. Tyr167 carries the post-translational modification Phosphotyrosine. The Nuclear localization signal signature appears at 172-175; the sequence is RRRH. Ser176, Ser192, and Ser272 each carry phosphoserine. An SEP domain is found at 179–244; sequence DVHVVLKLWK…MEDHRDEDFV (66 aa). The interval 272–292 is disordered; that stretch reads SPAQQAENEAKASSSISIDES. The 78-residue stretch at 291 to 368 folds into the UBX domain; that stretch reads ESQPTTNIQI…NLLNAVIVQR (78 aa).

In terms of assembly, part of a ternary complex containing STX5A, NSFL1C and VCP. NSFL1C forms a homotrimer that binds to one end of a VCP homohexamer. The complex binds to membranes enriched in phosphatidylethanolamine-containing lipids and promotes Golgi membrane fusion. Interaction with VCIP135 leads to dissociation of the complex via ATP hydrolysis by VCP. Binds ubiquitin and mono-ubiquitinated proteins via its N-terminal UBA-like domain when bound to VCP. Phosphorylated during mitosis. Phosphorylation inhibits interaction with Golgi membranes and is required for the fragmentation of the Golgi stacks during mitosis.

It localises to the nucleus. The protein resides in the golgi apparatus. Its subcellular location is the golgi stack. It is found in the chromosome. The protein localises to the cytoplasm. It localises to the cytoskeleton. The protein resides in the microtubule organizing center. Its subcellular location is the centrosome. In terms of biological role, reduces the ATPase activity of VCP. Necessary for the fragmentation of Golgi stacks during mitosis and for VCP-mediated reassembly of Golgi stacks after mitosis. May play a role in VCP-mediated formation of transitional endoplasmic reticulum (tER). Inhibits the activity of CTSL (in vitro). Together with UBXN2B/p37, regulates the centrosomal levels of kinase AURKA/Aurora A during mitotic progression by promoting AURKA removal from centrosomes in prophase. Also, regulates spindle orientation during mitosis. The sequence is that of NSFL1 cofactor p47 (NSFL1C) from Bos taurus (Bovine).